We begin with the raw amino-acid sequence, 404 residues long: Trigger factor (404 aa).

The region spanning 160 to 225 is the PPIase FKBP-type domain; sequence KDHLFVRTEE…VLEVKTLKLP (66 aa).

Belongs to the FKBP-type PPIase family. Tig subfamily.

The protein resides in the cytoplasm. The enzyme catalyses [protein]-peptidylproline (omega=180) = [protein]-peptidylproline (omega=0). Its function is as follows. Involved in protein export. Acts as a chaperone by maintaining the newly synthesized protein in an open conformation. Functions as a peptidyl-prolyl cis-trans isomerase. This Thermus thermophilus (strain ATCC 27634 / DSM 579 / HB8) protein is Trigger factor.